The primary structure comprises 104 residues: Small ribosomal subunit protein uS10 (104 aa).

This sequence belongs to the universal ribosomal protein uS10 family. Part of the 30S ribosomal subunit.

Its function is as follows. Involved in the binding of tRNA to the ribosomes. The protein is Small ribosomal subunit protein uS10 of Hydrogenobaculum sp. (strain Y04AAS1).